The following is a 187-amino-acid chain: Peptide deformylase (187 aa).

The Fe cation site is built by cysteine 107 and histidine 149. Glutamate 150 is an active-site residue. Histidine 153 contributes to the Fe cation binding site.

It belongs to the polypeptide deformylase family. Fe(2+) is required as a cofactor.

It carries out the reaction N-terminal N-formyl-L-methionyl-[peptide] + H2O = N-terminal L-methionyl-[peptide] + formate. In terms of biological role, removes the formyl group from the N-terminal Met of newly synthesized proteins. Requires at least a dipeptide for an efficient rate of reaction. N-terminal L-methionine is a prerequisite for activity but the enzyme has broad specificity at other positions. The polypeptide is Peptide deformylase (Microchaete diplosiphon (Fremyella diplosiphon)).